The primary structure comprises 339 residues: Putative NADP-dependent oxidoreductase YfmJ (339 aa).

NADP(+)-binding positions include 156–159, Lys182, Tyr198, Asn222, 244–250, 277–279, and Asn327; these read GAVG, CGAISSY, and FIV.

Belongs to the NADP-dependent oxidoreductase L4BD family.

Its function is as follows. Putative quinone oxidoreductase that may contribute to the degradation of aromatic compounds. The polypeptide is Putative NADP-dependent oxidoreductase YfmJ (yfmJ) (Bacillus subtilis (strain 168)).